A 225-amino-acid polypeptide reads, in one-letter code: uncharacterized protein (225 aa).

The first 22 residues, 1-22, serve as a signal peptide directing secretion; it reads MLQHYSVSWKKGLAALCLLAVA. The 4Fe-4S ferredoxin-type domain maps to 161–190; that stretch reads GNLTAAEEKKTGCLVCLDSCPVGIVSNATY.

This is an uncharacterized protein from Escherichia coli (strain K12).